Here is a 638-residue protein sequence, read N- to C-terminus: CTTNBP2 N-terminal-like protein (638 aa).

Residues 87–284 (MKQCKNMQER…KDLEAAQQHR (198 aa)) adopt a coiled-coil conformation. Disordered stretches follow at residues 280–303 (AQQH…TATE), 360–430 (RELT…PCSS), 463–490 (RHKF…LSPT), and 514–621 (NQGP…CSPS). Ser-285 carries the post-translational modification Phosphoserine. Polar residues predominate over residues 360 to 371 (RELTSDSSTENQ). 2 stretches are compositionally biased toward low complexity: residues 401 to 430 (TMPS…PCSS) and 467 to 477 (QSQADQDQQAS). Phosphoserine is present on residues Ser-481, Ser-488, Ser-522, Ser-526, Ser-559, Ser-562, and Ser-567. A compositionally biased stretch (polar residues) spans 514-528 (NQGPIKPVSPNSSPF). Residues Thr-569 and Thr-589 each carry the phosphothreonine modification. A compositionally biased stretch (polar residues) spans 589–620 (TPSQSATTPVTKTHSQASSLAATEDLASSCSP). Position 591 is a phosphoserine (Ser-591).

In terms of assembly, interacts with CTTN/cortactin; this interaction may redistribute CTTN to stress fibers. May form homomers. Associates with the core of STRIPAK complexes composed of PP2A catalytic and scaffolding subunits, the striatins (PP2A regulatory subunits), the striatin-associated proteins MOB4, STRIP1 and STRIP2, PDCD10 and members of the STE20 kinases, such as STK24 and STK26. In terms of tissue distribution, predominantly expressed in skin, also detectable in spleen and lung (at protein level). Very low levels, if any, in brain (at protein level).

Its subcellular location is the cell projection. The protein resides in the lamellipodium. The protein localises to the cytoplasm. It is found in the cytoskeleton. It localises to the stress fiber. Its function is as follows. Regulates lamellipodial actin dynamics in a CTTN-dependent manner. Associates with core striatin-interacting phosphatase and kinase (STRIPAK) complex to form CTTNBP2NL-STRIPAK complexes. STRIPAK complexes have critical roles in protein (de)phosphorylation and are regulators of multiple signaling pathways including Hippo, MAPK, nuclear receptor and cytoskeleton remodeling. Different types of STRIPAK complexes are involved in a variety of biological processes such as cell growth, differentiation, apoptosis, metabolism and immune regulation. This chain is CTTNBP2 N-terminal-like protein (Cttnbp2nl), found in Mus musculus (Mouse).